We begin with the raw amino-acid sequence, 1468 residues long: DNA polymerase alpha catalytic subunit A (1468 aa).

Basic and acidic residues predominate over residues 1 to 12; that stretch reads MSSKSEKLEKLR. Disordered regions lie at residues 1–34, 71–135, and 166–205; these read MSSKSEKLEKLRKLQAARNGTSIDDYEGDESDGD, GVEE…KKSI, and NLNSSPTSEFKSSIKRVNGNDESSHDAGISKKVKIDPDSS. The residue at position 2 (Ser2) is an N-acetylserine. Ser31 carries the phosphoserine modification. The segment covering 71 to 80 has biased composition (basic and acidic residues); sequence GVEEDWREVD. Phosphoserine occurs at positions 82, 83, 84, 169, and 170. Residues 166 to 176 are compositionally biased toward polar residues; it reads NLNSSPTSEFK. Phosphothreonine is present on Thr172. Positions 183–205 are enriched in basic and acidic residues; the sequence is NGNDESSHDAGISKKVKIDPDSS. 2 positions are modified to phosphoserine: Ser240 and Ser274. The segment at 256-275 is disordered; sequence LANPPSAQSLADEEDDEDSD. Residues 266–275 are compositionally biased toward acidic residues; the sequence is ADEEDDEDSD. Thr309 and Thr313 each carry phosphothreonine. A disordered region spans residues 813–837; the sequence is PDKEGNRSRAQKQRQNEENADAPVN. Residues 1246–1381 are DNA-binding; sequence KKYFRREGGN…CTGVMRYKYS (136 aa). The Zn(2+) site is built by Cys1287, Cys1290, Cys1314, Cys1317, Cys1348, Cys1353, Cys1367, and Cys1372. A CysA-type zinc finger spans residues 1287-1317; that stretch reads CPSCDKRFPFGGIVSSNYYRVSYNGLQCKHC. The CysB motif motif lies at 1348-1372; the sequence is CDDSTCGIVTRQVSVFGKRCLNDGC.

Belongs to the DNA polymerase type-B family. DNA polymerase alpha:primase is a four subunit enzyme complex, which is assembled throughout the cell cycle, and consists of the two DNA polymerase subunits A POL1 and B POL12, and the DNA primase large PRI2 and small PRI1 subunits. Subunit B POL12 binds to subunit A POL1. POL1 interacts with CDC13, POB3, SPT16 and MCM10.

The protein resides in the nucleus. The enzyme catalyses DNA(n) + a 2'-deoxyribonucleoside 5'-triphosphate = DNA(n+1) + diphosphate. Its function is as follows. Catalytic component of DNA polymerase alpha, which in complex with DNA primase (DNA polymerase alpha:primase) constitutes a replicative polymerase. POL1 has a role in promoting telomere replication during interaction with CDC13. The polypeptide is DNA polymerase alpha catalytic subunit A (POL1) (Saccharomyces cerevisiae (strain ATCC 204508 / S288c) (Baker's yeast)).